A 233-amino-acid polypeptide reads, in one-letter code: Auxin-responsive protein IAA11 (233 aa).

2 disordered regions span residues 1 to 27 (MAGL…RSSG) and 46 to 100 (PAAV…PKAQ). The short motif at 11–15 (LRLGL) is the EAR-like (transcriptional repression) element. Residues 54-63 (GAQEDKEDAD) show a composition bias toward acidic residues. The 96-residue stretch at 122–217 (AALVKVSMDG…SCKRLRIMKG (96 aa)) folds into the PB1 domain.

Belongs to the Aux/IAA family. In terms of assembly, homodimers and heterodimers. As to expression, highly expressed in etiolated shoots. Expressed in roots.

It is found in the nucleus. Its function is as follows. Aux/IAA proteins are short-lived transcriptional factors that function as repressors of early auxin response genes at low auxin concentrations. The protein is Auxin-responsive protein IAA11 (IAA11) of Oryza sativa subsp. japonica (Rice).